A 238-amino-acid polypeptide reads, in one-letter code: Ribitol-5-phosphate cytidylyltransferase 2 (238 aa).

Residues 7-10 (LAGG) and 81-87 (GTDRNET) each bind CTP.

Belongs to the IspD/TarI cytidylyltransferase family. TarI subfamily.

The enzyme catalyses D-ribitol 5-phosphate + CTP + H(+) = CDP-L-ribitol + diphosphate. It functions in the pathway cell wall biogenesis; poly(ribitol phosphate) teichoic acid biosynthesis. Catalyzes the transfer of the cytidylyl group of CTP to D-ribitol 5-phosphate. This chain is Ribitol-5-phosphate cytidylyltransferase 2, found in Staphylococcus aureus (strain MSSA476).